Consider the following 716-residue polypeptide: Protein C-mannosyl-transferase DPY19L3 (716 aa).

The Cytoplasmic portion of the chain corresponds to 1–43 (MMYIRQRKETKPIEVSEDFPSPKEDVKLEKKLPSGCASGRFWK). The chain crosses the membrane as a helical span at residues 44–64 (ILSSAVGGTVALCIGLLTSVY). Residues 65 to 154 (LATLHENDLW…RVLPIQKYLE (90 aa)) are Lumenal-facing. Asn-118 carries an N-linked (GlcNAc...) asparagine glycan. Residues 155–182 (PVYFYIYTLFGLQAVYVTALYITSWLLS) form a helical membrane-spanning segment. Residues 183–184 (GT) are Cytoplasmic-facing. Residues 185–197 (WLSGLLAALWYVT) constitute an intramembrane region (name=3). Topologically, residues 198 to 215 (NRIDTTRVEFTIPLRENW) are cytoplasmic. The segment at residues 216–230 (ALPFFAIQIAAITYF) is an intramembrane region (name=4). At 231–239 (LRPNLQPLS) the chain is on the cytoplasmic side. A helical transmembrane segment spans residues 240–256 (ERLTLLAIFVSTFLFSL). The Lumenal portion of the chain corresponds to 257-262 (TWQFNQ). The chain crosses the membrane as a helical span at residues 263–279 (FMMLLQALVLFILDSLD). Residues 280 to 289 (MLPAMKATWL) lie on the Cytoplasmic side of the membrane. Residues 290-306 (YGIQISCLLLVCTLQFF) form a helical membrane-spanning segment. Residues 307–308 (NS) are Lumenal-facing. The chain crosses the membrane as a helical span at residues 309–323 (MILGSLLISFNLSVL). At 324-338 (IVRKLQKNLKTGSFL) the chain is on the cytoplasmic side. The helical transmembrane segment at 339 to 359 (TRIWKLLLHLLLVFCLTLFLN) threads the bilayer. Over 360–414 (NIIKKVLNLKSDEHIFKFLKAKFGFGATRDFDANLYLCEEAFGLLPLNTFQRLSE) the chain is Lumenal. Residues 415–437 (TLLFYAYMFVLVVTVVTASVVAF) traverse the membrane as a helical segment. The Cytoplasmic segment spans residues 438 to 465 (HNLSDSTSLKSMDQTRKRAVDLKPEAAY). Residues 466–485 (NLIHTILFGVLALSTMRMKY) traverse the membrane as a helical segment. Residues 486–487 (LW) are Lumenal-facing. A helical transmembrane segment spans residues 488 to 499 (TSHMCVFASFGL). The Cytoplasmic segment spans residues 500–522 (CSSEVWELLLRLVHLCNPKRIWV). The helical transmembrane segment at 523 to 539 (LRYLVPVLTLLYLCYKS) threads the bilayer. Residues 540-716 (WPGVMDELSE…FHVYKLSRNK (177 aa)) are Lumenal-facing. A glycan (N-linked (GlcNAc...) asparagine) is linked at Asn-704.

This sequence belongs to the dpy-19 family.

The protein resides in the endoplasmic reticulum membrane. The enzyme catalyses L-tryptophyl-[protein] + a di-trans,poly-cis-dolichyl beta-D-mannosyl phosphate = C-alpha-D-mannosyl-L-tryptophyl-[protein] + a di-trans,poly-cis-dolichyl phosphate + H(+). It functions in the pathway protein modification; protein glycosylation. C-mannosyltransferase that mediates C-mannosylation of tryptophan residues on target proteins. The reaction occurs on the luminal side of the endoplasmic reticulum and involves the transfer of a mannose unit from a dolichylphosphate mannose (Dol-P-Man) donor to an acceptor protein containing a WxxW or WxxC consensus sequence. C-mannosylates RSPO1, a Wnt signaling regulator, preferentially at the first Trp residue in the sequence WxxW. C-mannosylates the netrin receptor UNC5A, preferentially at the third tryptophan of WxxWxxWxxC sequence. The chain is Protein C-mannosyl-transferase DPY19L3 (Dpy19l3) from Mus musculus (Mouse).